The primary structure comprises 565 residues: Small ribosomal subunit protein bS1 (565 aa).

S1 motif domains lie at 30–96 (SSVI…LSRD), 114–180 (NEKV…VSRR), 201–269 (GQVI…LGMK), 286–356 (NARF…LGLK), 373–443 (GSTV…LGVK), and 454–529 (GDVK…VSIK).

Belongs to the bacterial ribosomal protein bS1 family. Post-translationally, the initiator methionine may be removed.

In terms of biological role, binds mRNA; thus facilitating recognition of the initiation point. It is needed to translate mRNA with a short Shine-Dalgarno (SD) purine-rich sequence. The sequence is that of Small ribosomal subunit protein bS1 (rpsA) from Rhodopseudomonas palustris (strain ATCC BAA-98 / CGA009).